A 450-amino-acid chain; its full sequence is Mitochondrial distribution and morphology protein 10 (450 aa).

Belongs to the MDM10 family. As to quaternary structure, component of the ER-mitochondria encounter structure (ERMES) or MDM complex, composed of MMM1, MDM10, MDM12 and MDM34. Associates with the mitochondrial outer membrane sorting assembly machinery SAM(core) complex.

It is found in the mitochondrion outer membrane. Functionally, component of the ERMES/MDM complex, which serves as a molecular tether to connect the endoplasmic reticulum and mitochondria. Components of this complex are involved in the control of mitochondrial shape and protein biogenesis and may function in phospholipid exchange. MDM10 is involved in the late assembly steps of the general translocase of the mitochondrial outer membrane (TOM complex). Functions in the TOM40-specific route of the assembly of outer membrane beta-barrel proteins, including the association of TOM40 with the receptor TOM22 and small TOM proteins. Can associate with the SAM(core) complex as well as the MDM12-MMM1 complex, both involved in late steps of the major beta-barrel assembly pathway, that is responsible for biogenesis of all outer membrane beta-barrel proteins. May act as a switch that shuttles between both complexes and channels precursor proteins into the TOM40-specific pathway. Plays a role in mitochondrial morphology and in the inheritance of mitochondria. The protein is Mitochondrial distribution and morphology protein 10 of Paracoccidioides lutzii (strain ATCC MYA-826 / Pb01) (Paracoccidioides brasiliensis).